A 193-amino-acid polypeptide reads, in one-letter code: uncharacterized protein (193 aa).

The tract at residues 1 to 84 (MTSKCSKWHE…RRSNQRIQLY (84 aa)) is disordered. The segment covering 43–78 (SSPRRSSPRRSPRRSSPRRSSPRRSSPRRSSPRRSN) has biased composition (basic residues).

This sequence belongs to the IIV-6 378R family.

This is an uncharacterized protein from Invertebrate iridescent virus 6 (IIV-6).